The primary structure comprises 231 residues: NADH-ubiquinone oxidoreductase chain 4 (231 aa).

6 helical membrane passes run 1 to 21 (PIAGSMVLAAILLKLGGYGII), 34 to 54 (MFLPFVVLALWGAILANLTCL), 63 to 85 (IAYSSISHMGLVVAAIIIQTPWG), 89 to 111 (AMALMIAHGFTSSALFCLANTTY), 128 to 148 (ILPMATTWWLLTNLMNIAVPP), and 156 to 176 (LLIMSALFNWCPTTIIMLGLS).

It belongs to the complex I subunit 4 family.

The protein resides in the mitochondrion membrane. The enzyme catalyses a ubiquinone + NADH + 5 H(+)(in) = a ubiquinol + NAD(+) + 4 H(+)(out). Core subunit of the mitochondrial membrane respiratory chain NADH dehydrogenase (Complex I) that is believed to belong to the minimal assembly required for catalysis. Complex I functions in the transfer of electrons from NADH to the respiratory chain. The immediate electron acceptor for the enzyme is believed to be ubiquinone. The polypeptide is NADH-ubiquinone oxidoreductase chain 4 (MT-ND4) (Agkistrodon contortrix contortrix (Southern copperhead)).